The primary structure comprises 729 residues: MLYKGDTLYLDWLEDGIAELVFDAPGSVNKLDTATVASLGHALDVLEKQNDLKGLLLRSEKAAFIVGADITEFLSLFLVPEEQLSQWLHFANSVFNRLEDLPVPTISAVNGYALGGGCECVLATDYRLATPDLRIGLPETKLGIMPGFGGSVRLPRLLGADSALEIIAAGKDVGADQALKIGLVDGVVAAEKLRDGALAILRQAINGDLDWKAKRQPKLEPLKLSKIEATMSFTIAKGMVAQTAGKHYPAPITAVKTIEAAARLGREEALVLENKSFVPLAHTNEARALVGIFLNDQYVKAKAKKLTKDVETPKHAAVLGAGIMGGGIAYQSAWKGVPVVMKDISDKSLTLGMTEAAKLLNKQLERGKIDGLKLAGVISTIQPTLEYSGFDRVDVVVEAVVENPKVKKAVLAETEAKVRPDTVLASNTSTIPISELASVLQRPENFCGMHFFNPVHRMPLVEVIRGEKTSDKTIAKVVAWASKMGKTPIVVNDCPGFFVNRVLFPYFAGFSQLLRDGADFRKVDKVMEKQFGWPMGPAYLLDVVGIDTAHHAQAVMAAGFPQRMQKDYRDAIDALFDANRFGQKNGLGFWRYKEDSKGKPKKEEDAAVDSLLADVSQPKRDFSDEEIIARMMIPMVNEVVRCLEEGIIASPAEADMALVYGLGFPPFHGGAFRWLDTIGSAKYLDMAQQYQHLGPLYEVPAGLRDKARHNEAYYPQVEPARPVGALKTA.

The enoyl-CoA hydratase/isomerase stretch occupies residues 1-189; it reads MLYKGDTLYL…KIGLVDGVVA (189 aa). A substrate-binding site is contributed by aspartate 296. A 3-hydroxyacyl-CoA dehydrogenase region spans residues 311 to 729; that stretch reads ETPKHAAVLG…ARPVGALKTA (419 aa). NAD(+) is bound by residues methionine 324, aspartate 343, 400 to 402, lysine 407, and serine 429; that span reads VVE. The active-site For 3-hydroxyacyl-CoA dehydrogenase activity is histidine 450. An NAD(+)-binding site is contributed by asparagine 453. Substrate is bound by residues asparagine 500 and tyrosine 660.

This sequence in the N-terminal section; belongs to the enoyl-CoA hydratase/isomerase family. It in the C-terminal section; belongs to the 3-hydroxyacyl-CoA dehydrogenase family. As to quaternary structure, heterotetramer of two alpha chains (FadB) and two beta chains (FadA).

It catalyses the reaction a (3S)-3-hydroxyacyl-CoA + NAD(+) = a 3-oxoacyl-CoA + NADH + H(+). The enzyme catalyses a (3S)-3-hydroxyacyl-CoA = a (2E)-enoyl-CoA + H2O. The catalysed reaction is a 4-saturated-(3S)-3-hydroxyacyl-CoA = a (3E)-enoyl-CoA + H2O. It carries out the reaction (3S)-3-hydroxybutanoyl-CoA = (3R)-3-hydroxybutanoyl-CoA. It catalyses the reaction a (3Z)-enoyl-CoA = a 4-saturated (2E)-enoyl-CoA. The enzyme catalyses a (3E)-enoyl-CoA = a 4-saturated (2E)-enoyl-CoA. The protein operates within lipid metabolism; fatty acid beta-oxidation. Involved in the aerobic and anaerobic degradation of long-chain fatty acids via beta-oxidation cycle. Catalyzes the formation of 3-oxoacyl-CoA from enoyl-CoA via L-3-hydroxyacyl-CoA. It can also use D-3-hydroxyacyl-CoA and cis-3-enoyl-CoA as substrate. The polypeptide is Fatty acid oxidation complex subunit alpha (Klebsiella pneumoniae (strain 342)).